We begin with the raw amino-acid sequence, 224 residues long: Cysteine-rich hydrophobic domain-containing protein 1 (224 aa).

Residues 1 to 80 (MSILLPNMAE…PPPRVVSEEH (80 aa)) form a disordered region. The segment covering 13-25 (TISELEEEEEEEA) has biased composition (acidic residues). A compositionally biased stretch (low complexity) spans 26–40 (ATSSSSPSSSSSVSG). Residues 41–69 (PDDDEEDEEEEEEEEEEEEEEEEEEEEEA) are compositionally biased toward acidic residues. Residues 42-70 (DDDEEDEEEEEEEEEEEEEEEEEEEEEAP) adopt a coiled-coil conformation.

The protein belongs to the CHIC family. Palmitoylated. As to expression, equally expressed in various parts of the brain.

The protein localises to the cell membrane. Its subcellular location is the cytoplasmic vesicle. The chain is Cysteine-rich hydrophobic domain-containing protein 1 (CHIC1) from Homo sapiens (Human).